The following is a 625-amino-acid chain: Chaperone protein HtpG (625 aa).

Positions 1–332 (MSKKTNAPVQ…TEDLSLNVSR (332 aa)) are a; substrate-binding. A b region spans residues 333 to 545 (EVVQSSPVMA…KDAMDSQMER (213 aa)). Residues 546–625 (MMKMMQQEMP…ELIEAATLSR (80 aa)) are c.

Belongs to the heat shock protein 90 family. In terms of assembly, homodimer.

It is found in the cytoplasm. Molecular chaperone. Has ATPase activity. In Chlorobium phaeovibrioides (strain DSM 265 / 1930) (Prosthecochloris vibrioformis (strain DSM 265)), this protein is Chaperone protein HtpG.